Consider the following 201-residue polypeptide: Xanthine phosphoribosyltransferase (201 aa).

2 residues coordinate xanthine: Leu-20 and Asn-27. 129 to 133 is a binding site for 5-phospho-alpha-D-ribose 1-diphosphate; sequence ANGQA. Lys-157 is a xanthine binding site.

It belongs to the purine/pyrimidine phosphoribosyltransferase family. Xpt subfamily. Homodimer.

The protein resides in the cytoplasm. The enzyme catalyses XMP + diphosphate = xanthine + 5-phospho-alpha-D-ribose 1-diphosphate. It functions in the pathway purine metabolism; XMP biosynthesis via salvage pathway; XMP from xanthine: step 1/1. Functionally, converts the preformed base xanthine, a product of nucleic acid breakdown, to xanthosine 5'-monophosphate (XMP), so it can be reused for RNA or DNA synthesis. In Shouchella clausii (strain KSM-K16) (Alkalihalobacillus clausii), this protein is Xanthine phosphoribosyltransferase.